A 457-amino-acid polypeptide reads, in one-letter code: Siroheme synthase (457 aa).

Positions 1–204 are precorrin-2 dehydrogenase /sirohydrochlorin ferrochelatase; it reads MDHLPIFCQL…NDQKAITETT (204 aa). Residues 22–23 and 43–44 contribute to the NAD(+) site; these read DV and LA. Position 128 is a phosphoserine (serine 128). A uroporphyrinogen-III C-methyltransferase region spans residues 216–457; the sequence is GEVVLVGAGP…RDKLNWFSNH (242 aa). Proline 225 is a binding site for S-adenosyl-L-methionine. The active-site Proton acceptor is the aspartate 248. Lysine 270 functions as the Proton donor in the catalytic mechanism. Residues 301-303, isoleucine 306, 331-332, methionine 382, and glycine 411 contribute to the S-adenosyl-L-methionine site; these read GGD and TA.

The protein in the N-terminal section; belongs to the precorrin-2 dehydrogenase / sirohydrochlorin ferrochelatase family. In the C-terminal section; belongs to the precorrin methyltransferase family.

It catalyses the reaction uroporphyrinogen III + 2 S-adenosyl-L-methionine = precorrin-2 + 2 S-adenosyl-L-homocysteine + H(+). The enzyme catalyses precorrin-2 + NAD(+) = sirohydrochlorin + NADH + 2 H(+). It carries out the reaction siroheme + 2 H(+) = sirohydrochlorin + Fe(2+). The protein operates within cofactor biosynthesis; adenosylcobalamin biosynthesis; precorrin-2 from uroporphyrinogen III: step 1/1. It functions in the pathway cofactor biosynthesis; adenosylcobalamin biosynthesis; sirohydrochlorin from precorrin-2: step 1/1. Its pathway is porphyrin-containing compound metabolism; siroheme biosynthesis; precorrin-2 from uroporphyrinogen III: step 1/1. It participates in porphyrin-containing compound metabolism; siroheme biosynthesis; siroheme from sirohydrochlorin: step 1/1. The protein operates within porphyrin-containing compound metabolism; siroheme biosynthesis; sirohydrochlorin from precorrin-2: step 1/1. In terms of biological role, multifunctional enzyme that catalyzes the SAM-dependent methylations of uroporphyrinogen III at position C-2 and C-7 to form precorrin-2 via precorrin-1. Then it catalyzes the NAD-dependent ring dehydrogenation of precorrin-2 to yield sirohydrochlorin. Finally, it catalyzes the ferrochelation of sirohydrochlorin to yield siroheme. This chain is Siroheme synthase, found in Escherichia coli O157:H7 (strain EC4115 / EHEC).